The sequence spans 473 residues: Ribosomal RNA small subunit methyltransferase F (473 aa).

Residues 124-130 (ASAPGSK), Glu148, Asp175, and Asp193 each bind S-adenosyl-L-methionine. Cys246 functions as the Nucleophile in the catalytic mechanism.

Belongs to the class I-like SAM-binding methyltransferase superfamily. RsmB/NOP family.

The protein localises to the cytoplasm. The catalysed reaction is cytidine(1407) in 16S rRNA + S-adenosyl-L-methionine = 5-methylcytidine(1407) in 16S rRNA + S-adenosyl-L-homocysteine + H(+). Functionally, specifically methylates the cytosine at position 1407 (m5C1407) of 16S rRNA. The protein is Ribosomal RNA small subunit methyltransferase F of Aliivibrio fischeri (strain MJ11) (Vibrio fischeri).